We begin with the raw amino-acid sequence, 261 residues long: Cytochrome c oxidase subunit 3 (261 aa).

Topologically, residues 1–15 are mitochondrial matrix; that stretch reads MTHQTHACHMVNPSP. Residues 16 to 34 form a helical membrane-spanning segment; it reads WPLTGALSGLLMTSGLIMW. Residues 35–40 are Mitochondrial intermembrane-facing; it reads FHFNST. The chain crosses the membrane as a helical span at residues 41 to 66; it reads TLLMLGLTTNMLTMYQWWRDVIREST. At 67–72 the chain is on the mitochondrial matrix side; sequence FQGHHT. Residues 73-105 form a helical membrane-spanning segment; that stretch reads PNVQKGLRYGMILFIISEVLFFTGFFWAFYHSS. At 106 to 128 the chain is on the mitochondrial intermembrane side; that stretch reads LAPTPELGGCWPPTGIHPLNPLE. The helical transmembrane segment at 129–152 threads the bilayer; it reads VPLLNTSVLLASGVSITWAHHSLM. The Mitochondrial matrix segment spans residues 153 to 155; sequence EGN. The helical transmembrane segment at 156-183 threads the bilayer; the sequence is RNHMLQALFITIALGVYFTLLQASEYYE. Over 184-190 the chain is Mitochondrial intermembrane; that stretch reads APFTISD. The chain crosses the membrane as a helical span at residues 191-223; sequence GVYGSTFFVATGFHGLHVIIGSTFLIVCFFRQL. Topologically, residues 224 to 232 are mitochondrial matrix; sequence KFHFTSSHH. Residues 233 to 256 traverse the membrane as a helical segment; it reads FGFEAAAWYWHFVDVVWLFLYVSI. Over 257–261 the chain is Mitochondrial intermembrane; sequence YWWGS.

It belongs to the cytochrome c oxidase subunit 3 family. As to quaternary structure, component of the cytochrome c oxidase (complex IV, CIV), a multisubunit enzyme composed of 14 subunits. The complex is composed of a catalytic core of 3 subunits MT-CO1, MT-CO2 and MT-CO3, encoded in the mitochondrial DNA, and 11 supernumerary subunits COX4I, COX5A, COX5B, COX6A, COX6B, COX6C, COX7A, COX7B, COX7C, COX8 and NDUFA4, which are encoded in the nuclear genome. The complex exists as a monomer or a dimer and forms supercomplexes (SCs) in the inner mitochondrial membrane with NADH-ubiquinone oxidoreductase (complex I, CI) and ubiquinol-cytochrome c oxidoreductase (cytochrome b-c1 complex, complex III, CIII), resulting in different assemblies (supercomplex SCI(1)III(2)IV(1) and megacomplex MCI(2)III(2)IV(2)).

The protein resides in the mitochondrion inner membrane. It catalyses the reaction 4 Fe(II)-[cytochrome c] + O2 + 8 H(+)(in) = 4 Fe(III)-[cytochrome c] + 2 H2O + 4 H(+)(out). Functionally, component of the cytochrome c oxidase, the last enzyme in the mitochondrial electron transport chain which drives oxidative phosphorylation. The respiratory chain contains 3 multisubunit complexes succinate dehydrogenase (complex II, CII), ubiquinol-cytochrome c oxidoreductase (cytochrome b-c1 complex, complex III, CIII) and cytochrome c oxidase (complex IV, CIV), that cooperate to transfer electrons derived from NADH and succinate to molecular oxygen, creating an electrochemical gradient over the inner membrane that drives transmembrane transport and the ATP synthase. Cytochrome c oxidase is the component of the respiratory chain that catalyzes the reduction of oxygen to water. Electrons originating from reduced cytochrome c in the intermembrane space (IMS) are transferred via the dinuclear copper A center (CU(A)) of subunit 2 and heme A of subunit 1 to the active site in subunit 1, a binuclear center (BNC) formed by heme A3 and copper B (CU(B)). The BNC reduces molecular oxygen to 2 water molecules using 4 electrons from cytochrome c in the IMS and 4 protons from the mitochondrial matrix. The polypeptide is Cytochrome c oxidase subunit 3 (MT-CO3) (Gazella saudiya (Saudi gazelle)).